We begin with the raw amino-acid sequence, 364 residues long: Probable zinc transporter 10 (364 aa).

The first 28 residues, 1-28, serve as a signal peptide directing secretion; the sequence is MTKSHVIFSASIALFLLLSISHFPGALS. Topologically, residues 29-52 are extracellular; the sequence is QSNKDCQSKSNYSCIDKNKALDLK. A helical transmembrane segment spans residues 53–73; it reads LLSIFSILITSLIGVCLPFFA. The Cytoplasmic segment spans residues 74–85; the sequence is RSIPAFQPEKSH. A helical membrane pass occupies residues 86 to 106; that stretch reads FLIVKSFASGIILSTGFMHVL. The Extracellular portion of the chain corresponds to 107 to 125; sequence PDSFEMLSSPCLNDNPWHK. Residues 126–146 form a helical membrane-spanning segment; that stretch reads FPFAGFVAMMSAVFTLMVDSI. The Cytoplasmic portion of the chain corresponds to 147–209; the sequence is TTSVFTKSGR…GSYLQLLRYR (63 aa). The helical transmembrane segment at 210 to 230 threads the bilayer; the sequence is ILAIVLELGIVVQSIVIGLSV. Topologically, residues 231 to 241 are extracellular; sequence GDTNNTCTIKG. The helical transmembrane segment at 242–262 threads the bilayer; sequence LVAALCFHQMFEGMGLGGCIL. At 263 to 271 the chain is on the cytoplasmic side; the sequence is QAEYGWVKK. A helical membrane pass occupies residues 272-292; sequence AVMAFFFAVTTPFGVVLGMAL. At 293–303 the chain is on the extracellular side; that stretch reads SKTYKENSPES. The chain crosses the membrane as a helical span at residues 304-324; that stretch reads LITVGLLNASSAGLLIYMALV. Residues 325–343 lie on the Cytoplasmic side of the membrane; the sequence is DLLAADFMGQKMQRSIKLQ. The chain crosses the membrane as a helical span at residues 344-364; it reads LKSYAAVLLGAGGMSVMAKWA.

The protein belongs to the ZIP transporter (TC 2.A.5) family.

It localises to the cell membrane. Its function is as follows. Probably mediates zinc uptake from the rhizosphere. This chain is Probable zinc transporter 10 (ZIP10), found in Arabidopsis thaliana (Mouse-ear cress).